The sequence spans 292 residues: Probable alpha-L-glutamate ligase (292 aa).

One can recognise an ATP-grasp domain in the interval 104–287 (HQLLAAKGID…VATRIIEHVE (184 aa)). ATP contacts are provided by residues Lys-141, 178 to 179 (EF), Asp-187, and 211 to 213 (RSN). Asp-248, Glu-260, and Asn-262 together coordinate Mg(2+). 3 residues coordinate Mn(2+): Asp-248, Glu-260, and Asn-262.

Belongs to the RimK family. Requires Mg(2+) as cofactor. The cofactor is Mn(2+).

This is Probable alpha-L-glutamate ligase from Stenotrophomonas maltophilia (strain R551-3).